A 601-amino-acid chain; its full sequence is Elongation factor 4 (601 aa).

The region spanning 6–188 is the tr-type G domain; it reads KFTRNFSIIA…AICYLLPPPV (183 aa). GTP-binding positions include 18 to 23 and 135 to 138; these read DHGKST and NKID.

Belongs to the TRAFAC class translation factor GTPase superfamily. Classic translation factor GTPase family. LepA subfamily.

It localises to the cell inner membrane. It carries out the reaction GTP + H2O = GDP + phosphate + H(+). Required for accurate and efficient protein synthesis under certain stress conditions. May act as a fidelity factor of the translation reaction, by catalyzing a one-codon backward translocation of tRNAs on improperly translocated ribosomes. Back-translocation proceeds from a post-translocation (POST) complex to a pre-translocation (PRE) complex, thus giving elongation factor G a second chance to translocate the tRNAs correctly. Binds to ribosomes in a GTP-dependent manner. This chain is Elongation factor 4, found in Leptospira biflexa serovar Patoc (strain Patoc 1 / Ames).